Reading from the N-terminus, the 72-residue chain is uncharacterized protein (72 aa).

Residues 46-66 form a helical membrane-spanning segment; it reads AIFVFNLCFIPNLCVACIFNV.

It localises to the membrane. This is an uncharacterized protein from Saccharomyces cerevisiae (strain ATCC 204508 / S288c) (Baker's yeast).